Reading from the N-terminus, the 458-residue chain is Fasciclin-like arabinogalactan protein 17 (458 aa).

Residues 1 to 30 (MDRRIYGGSAVIHLFLFFSVLIFSAASALS) form the signal peptide. The 142-residue stretch at 43-184 (NSNSVLVALL…GLIHGIERLL (142 aa)) folds into the FAS1 1 domain. The N-linked (GlcNAc...) asparagine glycan is linked to Asn80. Residues 207 to 262 (PEGAPEVDPRTNRLKKPAAPVPAGSPPALPIQSAMAPGPSLAPAPAPGPGGKQHHF) form a disordered region. The span at 225–235 (APVPAGSPPAL) shows a compositional bias: pro residues. The region spanning 268 to 411 (VKDFIHTLLH…ISVQGIDGVL (144 aa)) is the FAS1 2 domain. N-linked (GlcNAc...) asparagine glycosylation occurs at Asn290.

This sequence belongs to the fasciclin-like AGP family.

It localises to the secreted. Functionally, may be a cell surface adhesion protein. In Arabidopsis thaliana (Mouse-ear cress), this protein is Fasciclin-like arabinogalactan protein 17 (FLA17).